A 178-amino-acid chain; its full sequence is Large ribosomal subunit protein uL6 (178 aa).

The protein belongs to the universal ribosomal protein uL6 family. As to quaternary structure, part of the 50S ribosomal subunit.

In terms of biological role, this protein binds to the 23S rRNA, and is important in its secondary structure. It is located near the subunit interface in the base of the L7/L12 stalk, and near the tRNA binding site of the peptidyltransferase center. In Corynebacterium kroppenstedtii (strain DSM 44385 / JCM 11950 / CIP 105744 / CCUG 35717), this protein is Large ribosomal subunit protein uL6.